Consider the following 172-residue polypeptide: Shikimate kinase (172 aa).

Residue 11 to 16 (ASGKTE) coordinates ATP. Mg(2+) is bound at residue threonine 15. Residues aspartate 33, arginine 57, and glycine 80 each coordinate substrate. Arginine 120 serves as a coordination point for ATP. Substrate is bound at residue arginine 142.

The protein belongs to the shikimate kinase family. As to quaternary structure, monomer. Mg(2+) serves as cofactor.

It localises to the cytoplasm. The enzyme catalyses shikimate + ATP = 3-phosphoshikimate + ADP + H(+). It participates in metabolic intermediate biosynthesis; chorismate biosynthesis; chorismate from D-erythrose 4-phosphate and phosphoenolpyruvate: step 5/7. Functionally, catalyzes the specific phosphorylation of the 3-hydroxyl group of shikimic acid using ATP as a cosubstrate. The polypeptide is Shikimate kinase (Flavobacterium psychrophilum (strain ATCC 49511 / DSM 21280 / CIP 103535 / JIP02/86)).